A 161-amino-acid polypeptide reads, in one-letter code: MAEVANNEQQAPQFNIQRVYTKDVSFETPNSPAVFQKEWNPEVKLDLDTRSAKLADDVYEVVLSLTVTAQNGGETAFLCEVQQAGIFSISGLTEPQLAHSLGAYCPNILFPYAREAVGSLVGRGTFPQLNLAPVNFDALFAQYVQQRQAAATAPAAEEANA.

The protein belongs to the SecB family. In terms of assembly, homotetramer, a dimer of dimers. One homotetramer interacts with 1 SecA dimer.

The protein resides in the cytoplasm. Its function is as follows. One of the proteins required for the normal export of preproteins out of the cell cytoplasm. It is a molecular chaperone that binds to a subset of precursor proteins, maintaining them in a translocation-competent state. It also specifically binds to its receptor SecA. In Shewanella putrefaciens (strain CN-32 / ATCC BAA-453), this protein is Protein-export protein SecB.